An 890-amino-acid chain; its full sequence is Alanine--tRNA ligase (890 aa).

Zn(2+) contacts are provided by His-573, His-577, Cys-676, and His-680.

Belongs to the class-II aminoacyl-tRNA synthetase family. Zn(2+) is required as a cofactor.

The protein localises to the cytoplasm. The catalysed reaction is tRNA(Ala) + L-alanine + ATP = L-alanyl-tRNA(Ala) + AMP + diphosphate. Catalyzes the attachment of alanine to tRNA(Ala) in a two-step reaction: alanine is first activated by ATP to form Ala-AMP and then transferred to the acceptor end of tRNA(Ala). Also edits incorrectly charged Ser-tRNA(Ala) and Gly-tRNA(Ala) via its editing domain. This Corynebacterium efficiens (strain DSM 44549 / YS-314 / AJ 12310 / JCM 11189 / NBRC 100395) protein is Alanine--tRNA ligase.